Consider the following 283-residue polypeptide: Probable endonuclease 4 (283 aa).

Zn(2+) is bound by residues His-69, His-113, Glu-148, Asp-182, His-185, His-217, Asp-230, His-232, and Glu-262.

It belongs to the AP endonuclease 2 family. The cofactor is Zn(2+).

It carries out the reaction Endonucleolytic cleavage to 5'-phosphooligonucleotide end-products.. Endonuclease IV plays a role in DNA repair. It cleaves phosphodiester bonds at apurinic or apyrimidinic (AP) sites, generating a 3'-hydroxyl group and a 5'-terminal sugar phosphate. In Bifidobacterium longum (strain NCC 2705), this protein is Probable endonuclease 4.